A 287-amino-acid polypeptide reads, in one-letter code: Phosphatidylserine decarboxylase proenzyme (287 aa).

Catalysis depends on charge relay system; for autoendoproteolytic cleavage activity residues Asp-90, His-147, and Ser-253. Ser-253 acts as the Schiff-base intermediate with substrate; via pyruvic acid; for decarboxylase activity in catalysis. Ser-253 is subject to Pyruvic acid (Ser); by autocatalysis.

It belongs to the phosphatidylserine decarboxylase family. PSD-B subfamily. Prokaryotic type I sub-subfamily. Heterodimer of a large membrane-associated beta subunit and a small pyruvoyl-containing alpha subunit. It depends on pyruvate as a cofactor. Post-translationally, is synthesized initially as an inactive proenzyme. Formation of the active enzyme involves a self-maturation process in which the active site pyruvoyl group is generated from an internal serine residue via an autocatalytic post-translational modification. Two non-identical subunits are generated from the proenzyme in this reaction, and the pyruvate is formed at the N-terminus of the alpha chain, which is derived from the carboxyl end of the proenzyme. The autoendoproteolytic cleavage occurs by a canonical serine protease mechanism, in which the side chain hydroxyl group of the serine supplies its oxygen atom to form the C-terminus of the beta chain, while the remainder of the serine residue undergoes an oxidative deamination to produce ammonia and the pyruvoyl prosthetic group on the alpha chain. During this reaction, the Ser that is part of the protease active site of the proenzyme becomes the pyruvoyl prosthetic group, which constitutes an essential element of the active site of the mature decarboxylase.

It localises to the cell membrane. It carries out the reaction a 1,2-diacyl-sn-glycero-3-phospho-L-serine + H(+) = a 1,2-diacyl-sn-glycero-3-phosphoethanolamine + CO2. It participates in phospholipid metabolism; phosphatidylethanolamine biosynthesis; phosphatidylethanolamine from CDP-diacylglycerol: step 2/2. In terms of biological role, catalyzes the formation of phosphatidylethanolamine (PtdEtn) from phosphatidylserine (PtdSer). In Aliivibrio salmonicida (strain LFI1238) (Vibrio salmonicida (strain LFI1238)), this protein is Phosphatidylserine decarboxylase proenzyme.